We begin with the raw amino-acid sequence, 880 residues long: Translation initiation factor IF-2 (880 aa).

Positions 259–281 (KNREEARAVGRSSKSQSKRKSST) are disordered. Residues 379 to 548 (SRAPVVTIMG…LLQAEVLELK (170 aa)) enclose the tr-type G domain. The tract at residues 388-395 (GHVDHGKT) is G1. 388–395 (GHVDHGKT) is a GTP binding site. The segment at 413-417 (GITQH) is G2. The interval 434–437 (DTPG) is G3. Residues 434–438 (DTPGH) and 488–491 (NKID) contribute to the GTP site. The tract at residues 488 to 491 (NKID) is G4. The interval 524–526 (SAK) is G5.

The protein belongs to the TRAFAC class translation factor GTPase superfamily. Classic translation factor GTPase family. IF-2 subfamily.

It is found in the cytoplasm. In terms of biological role, one of the essential components for the initiation of protein synthesis. Protects formylmethionyl-tRNA from spontaneous hydrolysis and promotes its binding to the 30S ribosomal subunits. Also involved in the hydrolysis of GTP during the formation of the 70S ribosomal complex. The protein is Translation initiation factor IF-2 of Baumannia cicadellinicola subsp. Homalodisca coagulata.